Consider the following 446-residue polypeptide: Na(+)-translocating NADH-quinone reductase subunit A (446 aa).

The protein belongs to the NqrA family. In terms of assembly, composed of six subunits; NqrA, NqrB, NqrC, NqrD, NqrE and NqrF.

It carries out the reaction a ubiquinone + n Na(+)(in) + NADH + H(+) = a ubiquinol + n Na(+)(out) + NAD(+). In terms of biological role, NQR complex catalyzes the reduction of ubiquinone-1 to ubiquinol by two successive reactions, coupled with the transport of Na(+) ions from the cytoplasm to the periplasm. NqrA to NqrE are probably involved in the second step, the conversion of ubisemiquinone to ubiquinol. The sequence is that of Na(+)-translocating NADH-quinone reductase subunit A from Psychromonas ingrahamii (strain DSM 17664 / CCUG 51855 / 37).